A 72-amino-acid chain; its full sequence is Gas vesicle protein A (72 aa).

This sequence belongs to the gas vesicle GvpA family. The gas vesicle shell is 2 nm thick and consists of a single layer of this protein. It forms helical ribs nearly perpendicular to the long axis of the vesicle.

It is found in the gas vesicle shell. Its function is as follows. Gas vesicles are hollow, gas filled proteinaceous nanostructures found in some microorganisms. During planktonic growth they allow positioning of the organism at a favorable depth for light or nutrient acquisition. GvpA forms the protein shell. This is Gas vesicle protein A from Planktothrix agardhii (Oscillatoria agardhii).